The sequence spans 299 residues: Biotin synthase (299 aa).

Residues 22-252 (TSNLKLDLCS…NVTIKIAAGR (231 aa)) enclose the Radical SAM core domain. 3 residues coordinate [4Fe-4S] cluster: cysteine 40, cysteine 44, and cysteine 47. [2Fe-2S] cluster contacts are provided by cysteine 116, cysteine 176, and lysine 247.

The protein belongs to the radical SAM superfamily. Biotin synthase family. In terms of assembly, homodimer. It depends on [4Fe-4S] cluster as a cofactor. The cofactor is [2Fe-2S] cluster.

The enzyme catalyses (4R,5S)-dethiobiotin + (sulfur carrier)-SH + 2 reduced [2Fe-2S]-[ferredoxin] + 2 S-adenosyl-L-methionine = (sulfur carrier)-H + biotin + 2 5'-deoxyadenosine + 2 L-methionine + 2 oxidized [2Fe-2S]-[ferredoxin]. The protein operates within cofactor biosynthesis; biotin biosynthesis; biotin from 7,8-diaminononanoate: step 2/2. In terms of biological role, catalyzes the conversion of dethiobiotin (DTB) to biotin by the insertion of a sulfur atom into dethiobiotin via a radical-based mechanism. This chain is Biotin synthase, found in Thermotoga petrophila (strain ATCC BAA-488 / DSM 13995 / JCM 10881 / RKU-1).